The chain runs to 55 residues: Protein CADMIUM TOLERANCE 1 (55 aa).

A helical transmembrane segment spans residues 24 to 40 (GCLYACIFTALCCFCCY).

It belongs to the CYSTM1 family. Expressed in roots and shoots.

Its subcellular location is the cell membrane. The protein resides in the secreted. It is found in the cell wall. Functionally, confers resistance to heavy metal ions (e.g. cadmium (CdCl(2)) and copper (CuCl(2))) by chelating them at the plasma membrane of root cells, thus stopping their entry and reducing their accumulation. Binds to aluminium (Al). This is Protein CADMIUM TOLERANCE 1 from Oryza sativa subsp. japonica (Rice).